The primary structure comprises 407 residues: Imidazolonepropionase (407 aa).

Fe(3+) contacts are provided by His-68 and His-70. Zn(2+) contacts are provided by His-68 and His-70. Positions 77, 140, and 173 each coordinate 4-imidazolone-5-propanoate. Residue Tyr-140 coordinates N-formimidoyl-L-glutamate. A Fe(3+)-binding site is contributed by His-238. His-238 contacts Zn(2+). Gln-241 contributes to the 4-imidazolone-5-propanoate binding site. Asp-313 provides a ligand contact to Fe(3+). Position 313 (Asp-313) interacts with Zn(2+). The N-formimidoyl-L-glutamate site is built by Asn-315 and Gly-317. 4-imidazolone-5-propanoate is bound at residue Thr-318.

The protein belongs to the metallo-dependent hydrolases superfamily. HutI family. Zn(2+) is required as a cofactor. Requires Fe(3+) as cofactor.

It localises to the cytoplasm. The enzyme catalyses 4-imidazolone-5-propanoate + H2O = N-formimidoyl-L-glutamate. It functions in the pathway amino-acid degradation; L-histidine degradation into L-glutamate; N-formimidoyl-L-glutamate from L-histidine: step 3/3. Functionally, catalyzes the hydrolytic cleavage of the carbon-nitrogen bond in imidazolone-5-propanoate to yield N-formimidoyl-L-glutamate. It is the third step in the universal histidine degradation pathway. The polypeptide is Imidazolonepropionase (Burkholderia mallei (strain ATCC 23344)).